The following is a 335-amino-acid chain: Tetraacyldisaccharide 4'-kinase (335 aa).

Thr-58 to Thr-65 is a binding site for ATP.

It belongs to the LpxK family.

It catalyses the reaction a lipid A disaccharide + ATP = a lipid IVA + ADP + H(+). It functions in the pathway glycolipid biosynthesis; lipid IV(A) biosynthesis; lipid IV(A) from (3R)-3-hydroxytetradecanoyl-[acyl-carrier-protein] and UDP-N-acetyl-alpha-D-glucosamine: step 6/6. Its function is as follows. Transfers the gamma-phosphate of ATP to the 4'-position of a tetraacyldisaccharide 1-phosphate intermediate (termed DS-1-P) to form tetraacyldisaccharide 1,4'-bis-phosphate (lipid IVA). The chain is Tetraacyldisaccharide 4'-kinase from Caulobacter sp. (strain K31).